Reading from the N-terminus, the 237-residue chain is MIRAHFQFKETITTILAEEQAWIEVAKEAMITARQDLERYIARDPFFQMTLEPYTPDHGPSIAERMAGAAGGAGVGPMAAVAGTIAAIGVGAMARAGAAFGVIDNGGDIALITDRPLRIGIYAGTSPISGKVAFVLPPQPAVYGVCTSSATVGPSLSFGVADAVTVFASDPSVADAWATALCNQVRPGVSTAFDSLAGSGVDGAVAILGGEVQRWGSVPPMVSATVDENLITAGELY.

This sequence belongs to the UPF0280 family.

The sequence is that of UPF0280 protein Mpal_1292 from Methanosphaerula palustris (strain ATCC BAA-1556 / DSM 19958 / E1-9c).